A 213-amino-acid chain; its full sequence is Nucleolar protein 12 (213 aa).

Residues 33–96 are a coiled coil; it reads GFHKRKVERK…RLVTAKTESV (64 aa). A disordered region spans residues 118 to 213; the sequence is ARLLGLTPPE…LTGKARHSGE (96 aa). Basic residues-rich tracts occupy residues 170-182 and 198-213; these read AHSR…KHPR and KAQR…HSGE.

The protein belongs to the RRP17 family. As to quaternary structure, interacts with KIAA1191.

The protein localises to the nucleus. The protein resides in the nucleolus. It localises to the cytoplasm. In terms of biological role, multifunctional RNA binding protein that plays a role in RNA metabolism and DNA maintenance. Participates in the resolution of DNA stress and the maintenance of genome integrity by localizing to sites of DNA insults. Also plays a role in proper nucleolar organization by limiting nucleolar size and regulating nucleolar number. Mechanistically, regulates the nucleolar levels of fibrillarin and nucleolin, two key players in pre-rRNA processing and ribosome assembly. The polypeptide is Nucleolar protein 12 (NOL12) (Homo sapiens (Human)).